The primary structure comprises 75 residues: U6-lycotoxin-Ls1f (75 aa).

The signal sequence occupies residues 1 to 21; sequence MKLLLFTALVLVVISLVEVEA. The propeptide occupies 22 to 25; it reads ENER.

The protein belongs to the neurotoxin 19 (CSTX) family. 06 (U6-Lctx) subfamily. Post-translationally, contains 4 disulfide bonds. In terms of tissue distribution, expressed by the venom gland.

The protein resides in the secreted. This Lycosa singoriensis (Wolf spider) protein is U6-lycotoxin-Ls1f.